The chain runs to 295 residues: GTPase Era (295 aa).

Residues lysine 4 to glutamate 171 enclose the Era-type G domain. The tract at residues glycine 12–serine 19 is G1. Position 12–19 (glycine 12–serine 19) interacts with GTP. The interval glutamine 38–asparagine 42 is G2. Residues aspartate 59–glycine 62 form a G3 region. Residues aspartate 59–isoleucine 63 and asparagine 121–aspartate 124 each bind GTP. A G4 region spans residues asparagine 121–aspartate 124. Residues isoleucine 150–alanine 152 form a G5 region. The KH type-2 domain occupies leucine 202–glutamate 280.

The protein belongs to the TRAFAC class TrmE-Era-EngA-EngB-Septin-like GTPase superfamily. Era GTPase family. Monomer.

The protein localises to the cytoplasm. It localises to the cell membrane. An essential GTPase that binds both GDP and GTP, with rapid nucleotide exchange. Plays a role in 16S rRNA processing and 30S ribosomal subunit biogenesis and possibly also in cell cycle regulation and energy metabolism. The polypeptide is GTPase Era (Alkaliphilus metalliredigens (strain QYMF)).